The sequence spans 427 residues: MEWPARLCGLWALLLCAGGGGGGGGAAPTETQPPVTNLSVSVENLCTVIWTWNPPEGASSNCSLWYFSHFGDKQDKKIAPETRRSIEVPLNERICLQVGSQCSTNESEKPSILVEKCISPPEGDPESAVTELQCIWHNLSYMKCSWLPGRNTSPDTNYTLYYWHRSLEKIHQCENIFREGQYFGCSFDLTKVKDSSFEQHSVQIMVKDNAGKIKPSFNIVPLTSRVKPDPPHIKNLSFHNDDLYVQWENPQNFISRCLFYEVEVNNSQTETHNVFYVQEAKCENPEFERNVENTSCFMVPGVLPDTLNTVRIRVKTNKLCYEDDKLWSNWSQEMSIGKKRNSTLYITMLLIVPVIVAGAIIVLLLYLKRLKIIIFPPIPDPGKIFKEMFGDQNDDTLHWKKYDIYEKQTKEETDSVVLIENLKKASQ.

Residues 1–21 (MEWPARLCGLWALLLCAGGGG) form the signal peptide. Residues 22–343 (GGGGAAPTET…MSIGKKRNST (322 aa)) are Extracellular-facing. 3 consecutive Fibronectin type-III domains span residues 34-123 (PVTN…PPEG), 128-226 (AVTE…TSRV), and 227-339 (KPDP…IGKK). N-linked (GlcNAc...) asparagine glycosylation is found at N37 and N61. Intrachain disulfides connect C62/C102, C95/C117, and C134/C144. Residues N105, N138, and N157 are each glycosylated (N-linked (GlcNAc...) asparagine). An intrachain disulfide couples C173 to C185. N-linked (GlcNAc...) asparagine glycans are attached at residues N235, N265, N293, N329, and N341. Intrachain disulfides connect C257-C320 and C282-C296. A WSXWS motif motif is present at residues 327-331 (WSNWS). Residues 344-367 (LYITMLLIVPVIVAGAIIVLLLYL) traverse the membrane as a helical segment. At 368–427 (KRLKIIIFPPIPDPGKIFKEMFGDQNDDTLHWKKYDIYEKQTKEETDSVVLIENLKKASQ) the chain is on the cytoplasmic side. A Box 1 motif motif is present at residues 374–382 (IFPPIPDPG).

The protein belongs to the type I cytokine receptor family. Type 5 subfamily. As to quaternary structure, interleukin-13 receptor is a complex of IL4R, IL13RA1, and possibly other components. Interacts with TRAF3IP1. Interacts with IL4. In terms of tissue distribution, ubiquitous. Highest levels in heart, liver, skeletal muscle and ovary; lowest levels in brain, lung and kidney. Also found in B-cells, T-cells and endothelial cells.

It is found in the membrane. Binds with low affinity to interleukin-13 (IL13). Together with IL4RA can form a functional receptor for IL13. Also serves as an alternate accessory protein to the common cytokine receptor gamma chain for interleukin-4 (IL4) signaling, but cannot replace the function of IL2RG in allowing enhanced interleukin-2 (IL2) binding activity. The polypeptide is Interleukin-13 receptor subunit alpha-1 (IL13RA1) (Homo sapiens (Human)).